The chain runs to 556 residues: Urocanate hydratase (556 aa).

NAD(+) is bound by residues 52–53, Gln-130, 176–178, Glu-196, Arg-201, 242–243, 263–267, 273–274, and Tyr-322; these read GG, GMG, NA, QTSAH, and YL. Cys-410 is a catalytic residue. Position 492 (Gly-492) interacts with NAD(+).

Belongs to the urocanase family. Requires NAD(+) as cofactor.

The protein resides in the cytoplasm. The enzyme catalyses 4-imidazolone-5-propanoate = trans-urocanate + H2O. It functions in the pathway amino-acid degradation; L-histidine degradation into L-glutamate; N-formimidoyl-L-glutamate from L-histidine: step 2/3. Functionally, catalyzes the conversion of urocanate to 4-imidazolone-5-propionate. This is Urocanate hydratase from Bradyrhizobium diazoefficiens (strain JCM 10833 / BCRC 13528 / IAM 13628 / NBRC 14792 / USDA 110).